The sequence spans 106 residues: NADH-quinone oxidoreductase subunit K (106 aa).

3 helical membrane passes run 10–30 (IHYYLILAMIIFTIGVAGVMV), 35–55 (VLIFMSVELILNSVNLVFVTF), and 67–87 (VVFFVMAIAAAEAAIGLAIVI).

It belongs to the complex I subunit 4L family. In terms of assembly, NDH-1 is composed of 14 different subunits. Subunits NuoA, H, J, K, L, M, N constitute the membrane sector of the complex.

It localises to the cell inner membrane. The enzyme catalyses a quinone + NADH + 5 H(+)(in) = a quinol + NAD(+) + 4 H(+)(out). NDH-1 shuttles electrons from NADH, via FMN and iron-sulfur (Fe-S) centers, to quinones in the respiratory chain. The immediate electron acceptor for the enzyme in this species is believed to be ubiquinone. Couples the redox reaction to proton translocation (for every two electrons transferred, four hydrogen ions are translocated across the cytoplasmic membrane), and thus conserves the redox energy in a proton gradient. This Leptospira borgpetersenii serovar Hardjo-bovis (strain JB197) protein is NADH-quinone oxidoreductase subunit K.